Reading from the N-terminus, the 72-residue chain is Translation initiation factor IF-1 (72 aa).

The S1-like domain maps to 1-72 (MAKEDSIEMQ…TKGRIVFRAR (72 aa)).

This sequence belongs to the IF-1 family. In terms of assembly, component of the 30S ribosomal translation pre-initiation complex which assembles on the 30S ribosome in the order IF-2 and IF-3, IF-1 and N-formylmethionyl-tRNA(fMet); mRNA recruitment can occur at any time during PIC assembly.

The protein localises to the cytoplasm. Its function is as follows. One of the essential components for the initiation of protein synthesis. Stabilizes the binding of IF-2 and IF-3 on the 30S subunit to which N-formylmethionyl-tRNA(fMet) subsequently binds. Helps modulate mRNA selection, yielding the 30S pre-initiation complex (PIC). Upon addition of the 50S ribosomal subunit IF-1, IF-2 and IF-3 are released leaving the mature 70S translation initiation complex. This is Translation initiation factor IF-1 from Idiomarina loihiensis (strain ATCC BAA-735 / DSM 15497 / L2-TR).